The chain runs to 307 residues: Acyl transferase (307 aa).

Catalysis depends on charge relay system residues serine 116, aspartate 213, and histidine 243.

The protein belongs to the LuxD family.

It functions in the pathway lipid metabolism; fatty acid reduction for biolumincescence. Acyl transferase is part of the fatty acid reductase system required for aldehyde biosynthesis; it produces fatty acids for the luminescent reaction. This Aliivibrio fischeri (strain MJ11) (Vibrio fischeri) protein is Acyl transferase.